Here is a 120-residue protein sequence, read N- to C-terminus: MDDSKVVGGKVKKPGKRGRKPAKIDLKAKLERSRQSARECRARKKLRYQYLEELVSSRERAICALREELEMYKQWCMAMDQGKIPSEIKALLTGEEQSKSQQNSSRHMKAGKTDANSNSW.

The disordered stretch occupies residues 1–24 (MDDSKVVGGKVKKPGKRGRKPAKI). Basic residues predominate over residues 10–21 (KVKKPGKRGRKP). In terms of domain architecture, bZIP spans 23–86 (KIDLKAKLER…MAMDQGKIPS (64 aa)). A basic motif region spans residues 29-60 (KLERSRQSARECRARKKLRYQYLEELVSSRER). A leucine-zipper region spans residues 62-69 (ICALREEL). A disordered region spans residues 93 to 120 (TGEEQSKSQQNSSRHMKAGKTDANSNSW).

This sequence belongs to the bZIP family. ATF subfamily. Interacts with CREB1; regulates CREB1 phosphorylation, stability and transcriptional activity. Interacts with immediate-early (IE) protein BICP22 of bovine herpesvirus-1 (BHV-1). Post-translationally, phosphorylated by AMPK.

The protein resides in the nucleus. Functionally, probable regulator of CREB1 transcriptional activity which is involved in adipose cells differentiation. May also play a regulatory role in the cell cycle. The sequence is that of cAMP-responsive element-binding protein-like 2 (CREBL2) from Bos taurus (Bovine).